Consider the following 320-residue polypeptide: UV DNA damage endonuclease (320 aa).

Belongs to the uve1/UvsE family.

Functionally, component in a DNA repair pathway. Removal of UV LIGHT damaged nucleotides. Recognizes pyrimidine dimers and cleave a phosphodiester bond immediately 5' to the lesion. This is UV DNA damage endonuclease from Bacillus velezensis (strain DSM 23117 / BGSC 10A6 / LMG 26770 / FZB42) (Bacillus amyloliquefaciens subsp. plantarum).